A 77-amino-acid chain; its full sequence is Acyl carrier protein (77 aa).

The 76-residue stretch at 1-76 (MATFDDVKAV…DVVNYIDNLK (76 aa)) folds into the Carrier domain. Serine 36 carries the post-translational modification O-(pantetheine 4'-phosphoryl)serine.

This sequence belongs to the acyl carrier protein (ACP) family. 4'-phosphopantetheine is transferred from CoA to a specific serine of apo-ACP by AcpS. This modification is essential for activity because fatty acids are bound in thioester linkage to the sulfhydryl of the prosthetic group.

The protein resides in the cytoplasm. The protein operates within lipid metabolism; fatty acid biosynthesis. In terms of biological role, carrier of the growing fatty acid chain in fatty acid biosynthesis. This is Acyl carrier protein from Campylobacter jejuni subsp. doylei (strain ATCC BAA-1458 / RM4099 / 269.97).